A 744-amino-acid chain; its full sequence is Catalase-peroxidase 3 (744 aa).

The tryptophyl-tyrosyl-methioninium (Trp-Tyr) (with M-254) cross-link spans 106–228 (WHFAGTYRIG…LAASEMGLIY (123 aa)). Histidine 107 serves as the catalytic Proton acceptor. Positions 228–254 (YVDPQGPATLPDPLASARDIRETFRRM) form a cross-link, tryptophyl-tyrosyl-methioninium (Tyr-Met) (with W-106). Histidine 269 provides a ligand contact to heme b.

Belongs to the peroxidase family. Peroxidase/catalase subfamily. In terms of assembly, homodimer or homotetramer. It depends on heme b as a cofactor. Post-translationally, formation of the three residue Trp-Tyr-Met cross-link is important for the catalase, but not the peroxidase activity of the enzyme.

The enzyme catalyses H2O2 + AH2 = A + 2 H2O. The catalysed reaction is 2 H2O2 = O2 + 2 H2O. In terms of biological role, bifunctional enzyme with both catalase and broad-spectrum peroxidase activity. This is Catalase-peroxidase 3 from Mycolicibacterium smegmatis (strain ATCC 700084 / mc(2)155) (Mycobacterium smegmatis).